The following is a 505-amino-acid chain: Structural protein 27 (505 aa).

Hydrophobic regions lie at residues 20-40, 423-443, and 470-490; these read VSLI…FSPV, MKGI…MSTI, and IGLG…LILV.

The protein resides in the virion. The sequence is that of Structural protein 27 from His1 virus (isolate Australia/Victoria) (His1V).